The sequence spans 341 residues: Holliday junction branch migration complex subunit RuvB (341 aa).

The interval methionine 1–tyrosine 180 is large ATPase domain (RuvB-L). ATP contacts are provided by leucine 19, arginine 20, glycine 61, lysine 64, threonine 65, threonine 66, arginine 170, tyrosine 180, and arginine 217. Position 65 (threonine 65) interacts with Mg(2+). The tract at residues asparagine 181–glycine 251 is small ATPAse domain (RuvB-S). Residues aspartate 254–phenylalanine 341 are head domain (RuvB-H). Positions 309 and 314 each coordinate DNA.

The protein belongs to the RuvB family. Homohexamer. Forms an RuvA(8)-RuvB(12)-Holliday junction (HJ) complex. HJ DNA is sandwiched between 2 RuvA tetramers; dsDNA enters through RuvA and exits via RuvB. An RuvB hexamer assembles on each DNA strand where it exits the tetramer. Each RuvB hexamer is contacted by two RuvA subunits (via domain III) on 2 adjacent RuvB subunits; this complex drives branch migration. In the full resolvosome a probable DNA-RuvA(4)-RuvB(12)-RuvC(2) complex forms which resolves the HJ.

The protein localises to the cytoplasm. The enzyme catalyses ATP + H2O = ADP + phosphate + H(+). In terms of biological role, the RuvA-RuvB-RuvC complex processes Holliday junction (HJ) DNA during genetic recombination and DNA repair, while the RuvA-RuvB complex plays an important role in the rescue of blocked DNA replication forks via replication fork reversal (RFR). RuvA specifically binds to HJ cruciform DNA, conferring on it an open structure. The RuvB hexamer acts as an ATP-dependent pump, pulling dsDNA into and through the RuvAB complex. RuvB forms 2 homohexamers on either side of HJ DNA bound by 1 or 2 RuvA tetramers; 4 subunits per hexamer contact DNA at a time. Coordinated motions by a converter formed by DNA-disengaged RuvB subunits stimulates ATP hydrolysis and nucleotide exchange. Immobilization of the converter enables RuvB to convert the ATP-contained energy into a lever motion, pulling 2 nucleotides of DNA out of the RuvA tetramer per ATP hydrolyzed, thus driving DNA branch migration. The RuvB motors rotate together with the DNA substrate, which together with the progressing nucleotide cycle form the mechanistic basis for DNA recombination by continuous HJ branch migration. Branch migration allows RuvC to scan DNA until it finds its consensus sequence, where it cleaves and resolves cruciform DNA. The sequence is that of Holliday junction branch migration complex subunit RuvB from Leptospira borgpetersenii serovar Hardjo-bovis (strain L550).